The chain runs to 164 residues: 2S seed storage protein 3 (164 aa).

Positions 1–21 are cleaved as a signal peptide; that stretch reads MANKLFLVCATLALCFLLTNA. 2 consecutive propeptides follow at residues 22–37 and 73–81; these read SIYRTVVEFEEDDASN and GPSLDDEFD.

This sequence belongs to the 2S seed storage albumins family. In terms of assembly, the mature protein consists of a small and a large chain linked by disulfide bonds. Interacts with AHK2.

Functionally, this is a 2S seed storage protein. The sequence is that of 2S seed storage protein 3 (AT2S3) from Arabidopsis thaliana (Mouse-ear cress).